Here is a 122-residue protein sequence, read N- to C-terminus: Large ribosomal subunit protein bL17 (122 aa).

Belongs to the bacterial ribosomal protein bL17 family. Part of the 50S ribosomal subunit. Contacts protein L32.

This is Large ribosomal subunit protein bL17 from Neisseria gonorrhoeae (strain ATCC 700825 / FA 1090).